A 190-amino-acid chain; its full sequence is Xanthine phosphoribosyltransferase (190 aa).

The xanthine site is built by Leu-20 and Asn-27. Ala-128–Ala-132 lines the 5-phospho-alpha-D-ribose 1-diphosphate pocket. Residue Lys-156 coordinates xanthine.

It belongs to the purine/pyrimidine phosphoribosyltransferase family. Xpt subfamily. Homodimer.

It is found in the cytoplasm. It catalyses the reaction XMP + diphosphate = xanthine + 5-phospho-alpha-D-ribose 1-diphosphate. It functions in the pathway purine metabolism; XMP biosynthesis via salvage pathway; XMP from xanthine: step 1/1. Converts the preformed base xanthine, a product of nucleic acid breakdown, to xanthosine 5'-monophosphate (XMP), so it can be reused for RNA or DNA synthesis. This Pediococcus pentosaceus (strain ATCC 25745 / CCUG 21536 / LMG 10740 / 183-1w) protein is Xanthine phosphoribosyltransferase.